Consider the following 287-residue polypeptide: MRLIVVSGHSGAGKSIALRVLEDLGYYCVDNLPVNLLDAFVHSIADSKQNVAVSIDIRNIPKKLKELTGTLEQLKTELDVTVLFLDANKETLLKRYSETRRIHPLSLGGQSLSLDQAIEREKEILTPLKAHADLILNSSGQSLHELSETVRMRVEGRDRKGLVMVFESFGFKYGLPSDADYVFDVRFLPNPHWEPALRPLTGLDAPIAAFLEQHQSVLSLKYQIESFIETWLPLLEKNNRSYLTVAIGCTGGKHRSVYLTQQIGEYFADKGHQVQIRHTSLEKNAKE.

8–15 is a binding site for ATP; the sequence is GHSGAGKS. 56-59 contributes to the GTP binding site; that stretch reads DIRN.

This sequence belongs to the RapZ-like family.

Its function is as follows. Displays ATPase and GTPase activities. In Vibrio parahaemolyticus serotype O3:K6 (strain RIMD 2210633), this protein is Nucleotide-binding protein VP2673.